The sequence spans 236 residues: 3-oxoacyl-[acyl-carrier-protein] reductase (236 aa).

Met1 is subject to N-acetylmethionine. NADP(+)-binding positions include 11-14 (SRGI) and 34-35 (RN). Lys40 is subject to N6-acetyllysine. Residues Asp56 and 83-85 (AAG) each bind NADP(+). Lys96 carries the N6-acetyllysine modification. Ser134 lines the substrate pocket. NADP(+)-binding positions include Tyr147, Lys151, and 180 to 182 (IRT). Catalysis depends on Tyr147, which acts as the Proton acceptor. N6-acetyllysine is present on Lys194.

This sequence belongs to the short-chain dehydrogenases/reductases (SDR) family. In terms of assembly, homotetramer (in vitro). Heterotetramer with HSD17B8; contains two molecules each of HSD17B8 and CBR4. Does not form homotetramers when HSD17B8 is coexpressed, only heterotetramers (in vitro).

The protein localises to the mitochondrion matrix. It carries out the reaction a (3R)-hydroxyacyl-[ACP] + NADP(+) = a 3-oxoacyl-[ACP] + NADPH + H(+). The catalysed reaction is a quinone + NADPH + H(+) = a quinol + NADP(+). It functions in the pathway lipid metabolism; fatty acid biosynthesis. Functionally, component of the heterotetramer complex KAR (3-ketoacyl-[acyl carrier protein] reductase or 3-ketoacyl-[ACP] reductase) that forms part of the mitochondrial fatty acid synthase (mtFAS). Beta-subunit of the KAR heterotetramer complex, responsible for the 3-ketoacyl-ACP reductase activity of the mtFAS, reduces 3-oxoacyl-[ACP] to (3R)-hydroxyacyl-[ACP] in a NADPH-dependent manner with no chain length preference, thereby participating in mitochondrial fatty acid biosynthesis. The homotetramer has NADPH-dependent quinone reductase activity (in vitro), hence could play a role in protection against cytotoxicity of exogenous quinones. As a heterotetramer, it can also reduce 9,10-phenanthrenequinone, 1,4-benzoquinone and various other o-quinones and p-quinones (in vitro). The chain is 3-oxoacyl-[acyl-carrier-protein] reductase (Cbr4) from Mus musculus (Mouse).